The primary structure comprises 437 residues: Triacylglycerol lipase (437 aa).

The region spanning 1–100 is the PE domain; that stretch reads MVSYVVALPE…AELANASLLQ (100 aa). Residues 101-206 form a linker region; sequence SEFASGIGNG…GNSPPPLLNS (106 aa). Residues 207–437 are lipase; the sequence is LLGQTVQYTT…QINQQLGIAA (231 aa). The Involved in the stabilization of the negatively charged intermediate by the formation of the oxyanion hole signature appears at 239–241; it reads HGG. Catalysis depends on residues S309, D383, and H413.

It in the N-terminal section; belongs to the mycobacterial PE family. PGRS subfamily. The protein in the C-terminal section; belongs to the 'GDXG' lipolytic enzyme family. As to quaternary structure, forms aggregates via its PE domain. Upon export, the PE domain is removed by proteolytic cleavage. Cleavage occurs at the cell surface and is not required for secretion. Cleaved after Gly-149 by the aspartic protease PecA. May also be cleaved before Leu-98 and after Ala-136.

It localises to the cytoplasm. The protein resides in the secreted. Its subcellular location is the cell wall. It is found in the cell surface. It carries out the reaction a triacylglycerol + H2O = a diacylglycerol + a fatty acid + H(+). The catalysed reaction is 1,2,3-tri-(9Z-octadecenoyl)-glycerol + H2O = di-(9Z)-octadecenoylglycerol + (9Z)-octadecenoate + H(+). It catalyses the reaction an acetyl ester + H2O = an aliphatic alcohol + acetate + H(+). The enzyme catalyses a butanoate ester + H2O = an aliphatic alcohol + butanoate + H(+). It carries out the reaction a hexanoate ester + H2O = an aliphatic alcohol + hexanoate + H(+). The catalysed reaction is an octanoate ester + H2O = an aliphatic alcohol + octanoate + H(+). It catalyses the reaction a dodecanoate ester + H2O = an aliphatic alcohol + dodecanoate + H(+). The enzyme catalyses a tetradecanoate ester + H2O = an aliphatic alcohol + tetradecanoate + H(+). It carries out the reaction hexadecanoate ester + H2O = an aliphatic alcohol + hexadecanoate + H(+). The catalysed reaction is octadecanoate ester + H2O = an aliphatic alcohol + octadecanoate + H(+). It catalyses the reaction 1-butyrylglycerol + H2O = butanoate + glycerol + H(+). The enzyme catalyses 1,2,3-tributanoylglycerol + H2O = dibutanoylglycerol + butanoate + H(+). With respect to regulation, PE domain down-regulates lipase activity. Its activity is regulated as follows. Cleavage by PecA does not affect surface localization and lipase activity. Inhibited by diethyl-p-nitrophenyl phosphate (E-600) at 0.5 uM, by phenylmethanesulfonyl fluoride at 5 mM and by polyethylene glycol sorbitan monolaurate (Tween 20). Also inhibited by CaCl(2), CoCl(2), MnCl(2), ZnCl(2) and MgCl(2). Inhibited by several hydrazides compounds. Stimulated slightly by SDS at concentrations up to 2 mM, above which the activity is severely inhibited. Catalyzes the hydrolysis of both intracellular and extracellular triacylglycerol (TAG). In vitro, can also hydrolyze p-nitrophenyl (pNP) esters with various chain lengths, including pNP-acetate (C2), pNP-butyrate (C4), pNP-caproate (C6), pNP-caprylate (C8), pNP-laurate (C12), pNP-myristate (C14), pNP-palmitate (C16) and pNP-stearate (C18). Also hydrolyzes monobutyrin, tributyrin and trioctanoin. Overexpression results in increase of virulence characterized by reduced survival of infected mouse and increased burden of bacilli in the lungs. Hydrolyzes internal or host-derived TAG depending on its localization. In terms of biological role, hydrolyzes TAG that accumulates within mycobacterial intracytosolic lipid inclusions (ILI). Probably responsible for the utilization of stored long-chain TAG during the dormancy and reactivation stages of the pathogen. Its function is as follows. Hydrolyzes host-derived TAG. The sequence is that of Triacylglycerol lipase from Mycobacterium tuberculosis (strain ATCC 25618 / H37Rv).